The following is a 375-amino-acid chain: G-protein coupled estrogen receptor 1 (375 aa).

The residue at position 1 (methionine 1) is an N-acetylmethionine. Residues 1–62 are Extracellular-facing; it reads MDVTSQARGV…QQYVIGLFLS (62 aa). Asparagine 25, asparagine 32, and asparagine 44 each carry an N-linked (GlcNAc...) asparagine glycan. Residues 63–84 traverse the membrane as a helical segment; the sequence is CLYTIFLFPIGFVGNILILVVN. Residues 85-96 lie on the Cytoplasmic side of the membrane; sequence ISFREKMTIPDL. Residues 97–120 form a helical membrane-spanning segment; that stretch reads YFINLAVADLILVADSLIEVFNLH. Residues 121 to 132 are Extracellular-facing; it reads ERYYDIAVLCTF. A disulfide bridge connects residues cysteine 130 and cysteine 207. A helical membrane pass occupies residues 133 to 153; sequence MSLFLQVNMYSSVFFLTWMSF. Residues 154 to 175 are Cytoplasmic-facing; the sequence is DRYIALARAMRCSLFRTKHHAR. The helical transmembrane segment at 176–194 threads the bilayer; that stretch reads LSCGLIWMASVSATLVPFT. Topologically, residues 195–220 are extracellular; the sequence is AVHLQHTDEACFCFADVREVQWLEVT. Residues 221–236 traverse the membrane as a helical segment; sequence LGFIVPFAIIGLCYSL. Topologically, residues 237 to 259 are cytoplasmic; sequence IVRVLVRAHRHRGLRPRRQKALR. Residues 260–280 traverse the membrane as a helical segment; the sequence is MILAVVLVFFVCWLPENVFIS. Over 281–306 the chain is Extracellular; it reads VHLLQRTQPGAAPCKQSFRHAHPLTG. A helical membrane pass occupies residues 307–327; sequence HIVNLAAFSNSCLNPLIYSFL. The Cytoplasmic portion of the chain corresponds to 328–375; that stretch reads GETFRDKLRLYIEQKTNLPALNRFCHAALKAVIPDSTEQSDVRFSSAV.

It belongs to the G-protein coupled receptor 1 family. As to quaternary structure, homodimer. Heterodimer; heterodimerizes with other G-protein-coupled receptor (GPCRs) like CRHR1, HTR1A and PAQR8. Interacts (via C-terminus tail motif) with DLG4 (via N-terminus tandem pair of PDZ domains); the interaction is direct and induces the increase of GPER1 protein levels residing at the plasma membrane surface in a estradiol-independent manner. Interacts with RAMP3; the interaction confers proper subcellular localization and function in cardioprotection. Interacts with KRT7 and KRT8. Interacts with EGFR; the interaction increases after agonist-induced stimulation in cancer-associated fibroblasts (CAF). Interacts with EGFR and ESR1. In terms of processing, ubiquitinated; ubiquitination occurs at the plasma membrane and leads to proteasome-mediated degradation. Glycosylated. As to expression, expressed in placenta, endothelial and epithelial cells, non laboring and laboring term myometrium, fibroblasts and cancer-associated fibroblasts (CAF), prostate cancer cells and invasive adenocarcinoma (at protein level). Ubiquitously expressed, but is most abundant in placenta. In brain regions, expressed as a 2.8 kb transcript in basal forebrain, frontal cortex, thalamus, hippocampus, caudate and putamen.

The protein resides in the nucleus. The protein localises to the cytoplasm. It is found in the perinuclear region. Its subcellular location is the cytoskeleton. It localises to the cell membrane. The protein resides in the basolateral cell membrane. The protein localises to the cytoplasmic vesicle membrane. It is found in the early endosome. Its subcellular location is the recycling endosome. It localises to the golgi apparatus membrane. The protein resides in the golgi apparatus. The protein localises to the trans-Golgi network. It is found in the endoplasmic reticulum membrane. Its subcellular location is the cell projection. It localises to the dendrite. The protein resides in the dendritic spine membrane. The protein localises to the axon. It is found in the postsynaptic density. Its subcellular location is the mitochondrion membrane. In terms of biological role, G-protein coupled estrogen receptor that binds to 17-beta-estradiol (E2) with high affinity, leading to rapid and transient activation of numerous intracellular signaling pathways. Stimulates cAMP production, calcium mobilization and tyrosine kinase Src inducing the release of heparin-bound epidermal growth factor (HB-EGF) and subsequent transactivation of the epidermal growth factor receptor (EGFR), activating downstream signaling pathways such as PI3K/Akt and ERK/MAPK. Mediates pleiotropic functions among others in the cardiovascular, endocrine, reproductive, immune and central nervous systems. Has a role in cardioprotection by reducing cardiac hypertrophy and perivascular fibrosis in a RAMP3-dependent manner. Regulates arterial blood pressure by stimulating vasodilation and reducing vascular smooth muscle and microvascular endothelial cell proliferation. Plays a role in blood glucose homeostasis contributing to the insulin secretion response by pancreatic beta cells. Triggers mitochondrial apoptosis during pachytene spermatocyte differentiation. Stimulates uterine epithelial cell proliferation. Enhances uterine contractility in response to oxytocin. Contributes to thymic atrophy by inducing apoptosis. Attenuates TNF-mediated endothelial expression of leukocyte adhesion molecules. Promotes neuritogenesis in developing hippocampal neurons. Plays a role in acute neuroprotection against NMDA-induced excitotoxic neuronal death. Increases firing activity and intracellular calcium oscillations in luteinizing hormone-releasing hormone (LHRH) neurons. Inhibits early osteoblast proliferation at growth plate during skeletal development. Inhibits mature adipocyte differentiation and lipid accumulation. Involved in the recruitment of beta-arrestin 2 ARRB2 at the plasma membrane in epithelial cells. Also functions as a receptor for aldosterone mediating rapid regulation of vascular contractibility through the PI3K/ERK signaling pathway. Involved in cancer progression regulation. Stimulates cancer-associated fibroblast (CAF) proliferation by a rapid genomic response through the EGFR/ERK transduction pathway. Associated with EGFR, may act as a transcription factor activating growth regulatory genes (c-fos, cyclin D1). Promotes integrin alpha-5/beta-1 and fibronectin (FN) matrix assembly in breast cancer cells. The sequence is that of G-protein coupled estrogen receptor 1 from Homo sapiens (Human).